The following is a 641-amino-acid chain: Glycerol metabolism operon regulatory protein (641 aa).

The interval 1 to 318 (MTTHTQDIGK…MRQLMTSQLG (318 aa)) is sensor domain. In terms of domain architecture, GAF spans 52-189 (ALLTIAQAAL…AIAREVGNSL (138 aa)). In terms of domain architecture, PAS spans 203–265 (NQMYGLLESM…MLLRRAIKHA (63 aa)). One can recognise a Sigma-54 factor interaction domain in the interval 327-552 (MSTDDPETRR…LNSIIENIAI (226 aa)). ATP-binding positions include 355-362 (GEEGVGKE) and 415-424 (ANGGTLFLEK).

Transcriptional activator of the glycerol utilization dha operon. This Citrobacter freundii protein is Glycerol metabolism operon regulatory protein.